Reading from the N-terminus, the 354-residue chain is Methylthioribose-1-phosphate isomerase (354 aa).

Residues 58-60 (RGA), Arg-101, and Gln-204 contribute to the substrate site. Asp-245 (proton donor) is an active-site residue. Position 255-256 (255-256 (NK)) interacts with substrate.

Belongs to the eIF-2B alpha/beta/delta subunits family. MtnA subfamily.

The enzyme catalyses 5-(methylsulfanyl)-alpha-D-ribose 1-phosphate = 5-(methylsulfanyl)-D-ribulose 1-phosphate. It functions in the pathway amino-acid biosynthesis; L-methionine biosynthesis via salvage pathway; L-methionine from S-methyl-5-thio-alpha-D-ribose 1-phosphate: step 1/6. Its function is as follows. Catalyzes the interconversion of methylthioribose-1-phosphate (MTR-1-P) into methylthioribulose-1-phosphate (MTRu-1-P). This Xanthomonas campestris pv. campestris (strain ATCC 33913 / DSM 3586 / NCPPB 528 / LMG 568 / P 25) protein is Methylthioribose-1-phosphate isomerase.